We begin with the raw amino-acid sequence, 264 residues long: Thymidylate synthase (264 aa).

A dUMP-binding site is contributed by arginine 21. (6R)-5,10-methylene-5,6,7,8-tetrahydrofolate is bound at residue histidine 51. DUMP is bound at residue 126–127; sequence RR. Residue cysteine 146 is the Nucleophile of the active site. DUMP-binding positions include 166-169, asparagine 177, and 207-209; these read RSVD and HLY. (6R)-5,10-methylene-5,6,7,8-tetrahydrofolate is bound at residue aspartate 169. Alanine 263 provides a ligand contact to (6R)-5,10-methylene-5,6,7,8-tetrahydrofolate.

It belongs to the thymidylate synthase family. Bacterial-type ThyA subfamily. Homodimer.

It localises to the cytoplasm. It carries out the reaction dUMP + (6R)-5,10-methylene-5,6,7,8-tetrahydrofolate = 7,8-dihydrofolate + dTMP. It functions in the pathway pyrimidine metabolism; dTTP biosynthesis. Functionally, catalyzes the reductive methylation of 2'-deoxyuridine-5'-monophosphate (dUMP) to 2'-deoxythymidine-5'-monophosphate (dTMP) while utilizing 5,10-methylenetetrahydrofolate (mTHF) as the methyl donor and reductant in the reaction, yielding dihydrofolate (DHF) as a by-product. This enzymatic reaction provides an intracellular de novo source of dTMP, an essential precursor for DNA biosynthesis. This Geobacillus thermodenitrificans (strain NG80-2) protein is Thymidylate synthase.